The primary structure comprises 300 residues: Tumor necrosis factor receptor superfamily member 6B (300 aa).

The first 29 residues, 1–29 (MRALEGPGLSLLCLVLALPALLPVPAVRG), serve as a signal peptide directing secretion. 4 TNFR-Cys repeats span residues 31-70 (AETP…PTTC), 72-113 (PCPP…NRAC), 115-150 (CRTG…NTQC), and 152-193 (PCPP…DTLC). Intrachain disulfides connect C49–C62, C52–C70, C73–C88, C91–C105, C95–C113, C115–C126, C132–C150, and C153–C168. A glycan (N-linked (GlcNAc...) asparagine) is linked at N173. C174 and C193 are joined by a disulfide.

In terms of tissue distribution, detected in fetal lung, brain and liver. Detected in adult stomach, spinal cord, lymph node, trachea, spleen, colon and lung. Highly expressed in several primary tumors from colon, stomach, rectum, esophagus and in SW480 colon carcinoma cells.

Its subcellular location is the secreted. Functionally, decoy receptor that can neutralize the cytotoxic ligands TNFS14/LIGHT, TNFSF15 and TNFSF6/FASL. Protects against apoptosis. The protein is Tumor necrosis factor receptor superfamily member 6B (TNFRSF6B) of Homo sapiens (Human).